Here is a 27-residue protein sequence, read N- to C-terminus: Urumin (27 aa).

As to expression, expressed by the skin glands.

It is found in the secreted. In terms of biological role, amphibian peptide that shows viricidal activity against human H1N1 influenza A virus. It specifically targets the conserved stalk region of H1 hemagglutinin, and acts by actively destroying influenza virions. It shows a reduced activity on human H3N2 influenza A virus and no activity against other viruses (HIV, SIV, HSV-II, hepatitis C, Ebola, Zika, and Dengue viruses). In vivo, the peptide also protects mice infected with mouse-adapted influenza virus from lethal influenza infection. The peptide synthesized in D-amino acids is inactive. This Hydrophylax bahuvistara (Wide-spread fungoid frog) protein is Urumin.